Reading from the N-terminus, the 297-residue chain is 4-hydroxy-tetrahydrodipicolinate synthase (297 aa).

Thr45 provides a ligand contact to pyruvate. The active-site Proton donor/acceptor is Tyr133. Lys161 functions as the Schiff-base intermediate with substrate in the catalytic mechanism. Pyruvate is bound at residue Ile203.

The protein belongs to the DapA family. In terms of assembly, homotetramer; dimer of dimers.

It is found in the cytoplasm. The catalysed reaction is L-aspartate 4-semialdehyde + pyruvate = (2S,4S)-4-hydroxy-2,3,4,5-tetrahydrodipicolinate + H2O + H(+). The protein operates within amino-acid biosynthesis; L-lysine biosynthesis via DAP pathway; (S)-tetrahydrodipicolinate from L-aspartate: step 3/4. Functionally, catalyzes the condensation of (S)-aspartate-beta-semialdehyde [(S)-ASA] and pyruvate to 4-hydroxy-tetrahydrodipicolinate (HTPA). This is 4-hydroxy-tetrahydrodipicolinate synthase from Buchnera aphidicola subsp. Cinara cedri (strain Cc).